The following is a 487-amino-acid chain: MTELHHLTVTAAQAALAAGDITAVELTEACLARINATEPTIRAFLHLTPDAALAAARAADERRQQGRSLGPLDGIPIAIKDVICTDGVPTTAGSRILAGFRPPYNATVIERLVAAGAVLVGKLNCDEFAMGSSTENSAYQITTNPWDPTRVPGGSSGGSAAAVAAGQVPATLGTDTGGSIRQPAALCGISGLKPTYGRVSRYGLIAYGSSLDQIGPMAWTVADLAVLLNVIAGHDPRDGTSAPIDTPDYTTALTGDIRGLRIGIPREYFVEGMEPGVESATRTAIEVLRDLGAILVDVSLPHTRYALPTYYIIAPAEASANLARFDGVRYGFRAEGETMWEQIEQTRGQGFGPEVRRRIMLGTYALSAGYYDAYYRRAQQVRTLIKRDFEQVFTQVDLLAAPTSPTVAFPIGQKINDPLAMYLSDVCTLPINLAGVPALVVPCGFSEGLPVGLQLIGRPFDEATLLRVGDAYQRLTEWHTQRPRLVV.

Catalysis depends on charge relay system residues lysine 80 and serine 155. Residue serine 179 is the Acyl-ester intermediate of the active site.

The protein belongs to the amidase family. GatA subfamily. In terms of assembly, heterotrimer of A, B and C subunits.

The catalysed reaction is L-glutamyl-tRNA(Gln) + L-glutamine + ATP + H2O = L-glutaminyl-tRNA(Gln) + L-glutamate + ADP + phosphate + H(+). In terms of biological role, allows the formation of correctly charged Gln-tRNA(Gln) through the transamidation of misacylated Glu-tRNA(Gln) in organisms which lack glutaminyl-tRNA synthetase. The reaction takes place in the presence of glutamine and ATP through an activated gamma-phospho-Glu-tRNA(Gln). The chain is Glutamyl-tRNA(Gln) amidotransferase subunit A from Chloroflexus aurantiacus (strain ATCC 29366 / DSM 635 / J-10-fl).